Here is a 139-residue protein sequence, read N- to C-terminus: Putative nickel-responsive regulator (139 aa).

Ni(2+)-binding residues include histidine 77, histidine 88, histidine 90, and cysteine 96.

This sequence belongs to the transcriptional regulatory CopG/NikR family. Ni(2+) is required as a cofactor.

In terms of biological role, transcriptional regulator. The polypeptide is Putative nickel-responsive regulator (Haloarcula marismortui (strain ATCC 43049 / DSM 3752 / JCM 8966 / VKM B-1809) (Halobacterium marismortui)).